Consider the following 518-residue polypeptide: GMP synthase [glutamine-hydrolyzing] (518 aa).

In terms of domain architecture, Glutamine amidotransferase type-1 spans 11–203 (KIIVLDFGSQ…AFDVCQARSN (193 aa)). Catalysis depends on Cys-88, which acts as the Nucleophile. Residues His-177 and Glu-179 contribute to the active site. The 190-residue stretch at 204–393 (WSMDDFIDMQ…LGMPHELVWR (190 aa)) folds into the GMPS ATP-PPase domain. 231 to 237 (SGGVDSS) lines the ATP pocket.

In terms of assembly, homodimer.

The catalysed reaction is XMP + L-glutamine + ATP + H2O = GMP + L-glutamate + AMP + diphosphate + 2 H(+). It functions in the pathway purine metabolism; GMP biosynthesis; GMP from XMP (L-Gln route): step 1/1. Functionally, catalyzes the synthesis of GMP from XMP. This Ligilactobacillus salivarius (strain UCC118) (Lactobacillus salivarius) protein is GMP synthase [glutamine-hydrolyzing].